Consider the following 69-residue polypeptide: MMMMTKMFVQIAVVCLLATMAVVSAHEGHHHHAPAPAPGPASSSTVVSATNMFTVLAIAAVALVVGSNH.

An N-terminal signal peptide occupies residues 1–25 (MMMMTKMFVQIAVVCLLATMAVVSA). A 4-hydroxyproline mark is found at P34, P36, P38, and P40. 4 O-linked (Ara...) hydroxyproline glycosylation sites follow: P34, P36, P38, and P40. The GPI-anchor amidated serine moiety is linked to residue S42. Residues 43–69 (SSTVVSATNMFTVLAIAAVALVVGSNH) constitute a propeptide, removed in mature form.

Belongs to the AG-peptide AGP family. In terms of processing, contains 4-hydroxyproline; hydroxylated on Pro-34, Pro-36, Pro-38 and Pro-40. O-glycosylated on hydroxyprolines; noncontiguous hydroxylproline residues are glycosylated with arabinogalactan.

The protein resides in the cell membrane. Functionally, proteoglycan that seems to be implicated in diverse developmental roles such as differentiation, cell-cell recognition, embryogenesis and programmed cell death. The sequence is that of Arabinogalactan protein 24 from Arabidopsis thaliana (Mouse-ear cress).